Reading from the N-terminus, the 427-residue chain is Mannosylglucosylglycerate synthase (427 aa).

The protein belongs to the glycosyltransferase group 1 family. Co(2+) is required as a cofactor. Requires Mg(2+) as cofactor. The cofactor is Mn(2+). Ni(2+) serves as cofactor.

The catalysed reaction is (2R)-2-O-(alpha-D-glucopyranosyl)-glycerate + GDP-alpha-D-mannose = (2R)-2-O-[alpha-D-mannopyranosyl-(1-&gt;2)-alpha-D-glucopyranosyl]-glycerate + GDP + H(+). In terms of biological role, catalyzes the synthesis of mannosylglucosylglycerate (MGG) from glucosylglycerate (GG) and GDP-mannose. In Thermotoga maritima (strain ATCC 43589 / DSM 3109 / JCM 10099 / NBRC 100826 / MSB8), this protein is Mannosylglucosylglycerate synthase.